A 491-amino-acid polypeptide reads, in one-letter code: Glycogen synthase (491 aa).

Residue arginine 20 coordinates ADP-alpha-D-glucose.

This sequence belongs to the glycosyltransferase 1 family. Bacterial/plant glycogen synthase subfamily.

It catalyses the reaction [(1-&gt;4)-alpha-D-glucosyl](n) + ADP-alpha-D-glucose = [(1-&gt;4)-alpha-D-glucosyl](n+1) + ADP + H(+). It functions in the pathway glycan biosynthesis; glycogen biosynthesis. Its function is as follows. Synthesizes alpha-1,4-glucan chains using ADP-glucose. The sequence is that of Glycogen synthase from Prosthecochloris aestuarii (strain DSM 271 / SK 413).